The primary structure comprises 375 residues: 3-dehydroquinate synthase (375 aa).

Residues 82 to 87, 116 to 120, 140 to 141, Lys153, and Lys162 contribute to the NAD(+) site; these read SGETSK, GVVGD, and TT. Positions 195, 259, and 276 each coordinate Zn(2+).

It belongs to the sugar phosphate cyclases superfamily. Dehydroquinate synthase family. Requires NAD(+) as cofactor. The cofactor is Co(2+). Zn(2+) is required as a cofactor.

The protein resides in the cytoplasm. It carries out the reaction 7-phospho-2-dehydro-3-deoxy-D-arabino-heptonate = 3-dehydroquinate + phosphate. Its pathway is metabolic intermediate biosynthesis; chorismate biosynthesis; chorismate from D-erythrose 4-phosphate and phosphoenolpyruvate: step 2/7. In terms of biological role, catalyzes the conversion of 3-deoxy-D-arabino-heptulosonate 7-phosphate (DAHP) to dehydroquinate (DHQ). This chain is 3-dehydroquinate synthase, found in Rhodopirellula baltica (strain DSM 10527 / NCIMB 13988 / SH1).